A 189-amino-acid polypeptide reads, in one-letter code: Thermostable direct hemolysin 1 (189 aa).

An N-terminal signal peptide occupies residues 1–24; the sequence is MKHQYFAKKSFLFISMLAAFKTSA. The cysteines at positions 175 and 185 are disulfide-linked.

The protein belongs to the TDH hemolysin family. Homodimer.

Its function is as follows. Bacterial hemolysins are exotoxins that attack blood cell membranes and cause cell rupture by mechanisms not clearly defined. This Vibrio parahaemolyticus serotype O3:K6 (strain RIMD 2210633) protein is Thermostable direct hemolysin 1 (tdh1).